A 206-amino-acid polypeptide reads, in one-letter code: Max dimerization protein 3 (206 aa).

Residues 8 to 25 (IQVLLQAAEFLERREREA) form an interaction with SIN3A and SIN3B region. A bHLH domain is found at 57 to 109 (SGRHVHNELEKRRRAQLKRCLEQLRQQMPLGVDHTRYTTLSLLRGARMHIQKL).

In terms of assembly, efficient DNA binding requires dimerization with another bHLH protein. Binds DNA as a heterodimer with MAX. Interacts with SIN3A AND SIN3B. Interacts with RNF17.

The protein resides in the nucleus. In terms of biological role, transcriptional repressor. Binds with MAX to form a sequence-specific DNA-binding protein complex which recognizes the core sequence 5'-CAC[GA]TG-3'. Antagonizes MYC transcriptional activity by competing for MAX and suppresses MYC dependent cell transformation. In Rattus norvegicus (Rat), this protein is Max dimerization protein 3 (Mxd3).